The chain runs to 37 residues: Large ribosomal subunit protein bL36 (37 aa).

It belongs to the bacterial ribosomal protein bL36 family.

In Streptomyces griseus subsp. griseus (strain JCM 4626 / CBS 651.72 / NBRC 13350 / KCC S-0626 / ISP 5235), this protein is Large ribosomal subunit protein bL36.